Here is a 255-residue protein sequence, read N- to C-terminus: Hydroxyacylglutathione hydrolase (255 aa).

Zn(2+) is bound by residues His-56, His-58, Asp-60, His-61, His-114, Asp-133, and His-171.

Belongs to the metallo-beta-lactamase superfamily. Glyoxalase II family. In terms of assembly, monomer. It depends on Zn(2+) as a cofactor.

It catalyses the reaction an S-(2-hydroxyacyl)glutathione + H2O = a 2-hydroxy carboxylate + glutathione + H(+). The protein operates within secondary metabolite metabolism; methylglyoxal degradation; (R)-lactate from methylglyoxal: step 2/2. In terms of biological role, thiolesterase that catalyzes the hydrolysis of S-D-lactoyl-glutathione to form glutathione and D-lactic acid. This is Hydroxyacylglutathione hydrolase from Roseobacter denitrificans (strain ATCC 33942 / OCh 114) (Erythrobacter sp. (strain OCh 114)).